Reading from the N-terminus, the 177-residue chain is Transcription termination/antitermination protein NusG (177 aa).

The 29-residue stretch at 128–156 (ETVKVIDGPFANFTGSIEEIDYDKSKVKV) folds into the KOW domain.

The protein belongs to the NusG family.

Participates in transcription elongation, termination and antitermination. Stimulates RNA polymerase pausing at U107 and U144 in the trp leader. NusG-stimulated pausing is sequence specific. Does not affect trp leader termination. The sequence is that of Transcription termination/antitermination protein NusG from Bacillus subtilis (strain 168).